Here is a 300-residue protein sequence, read N- to C-terminus: MITDKTECNNPLFGRILTAMVTPFTENGDVDYELAIKLSNYLFENGSDGIVLCGTTGESPTLSWAEQHDLFIAVKGSLDASCKVIVGTGSNCTSEAVEATKKAYDSGADGALVVVPYYNKPPQEGLYKHFSSIAKSAKDLPLMLYNIPGRTGCNLLPDTVKKLMDFSNILSIKAASGRIEEVTELRAICGSELSVYSGDDSLLLPMLSVGAVGVVSVASHLVGLQLKEMIHSFQSGKVSNALAIHEKLQPLFKALFMTTNPIPIKAALELSGWDVGNPRSPLSPLNNDMKKQLSFILNSL.

T56 is a binding site for pyruvate. Residue Y145 is the Proton donor/acceptor of the active site. K173 acts as the Schiff-base intermediate with substrate in catalysis. V215 is a binding site for pyruvate.

It belongs to the DapA family. As to quaternary structure, homotetramer; dimer of dimers.

It localises to the cytoplasm. It carries out the reaction L-aspartate 4-semialdehyde + pyruvate = (2S,4S)-4-hydroxy-2,3,4,5-tetrahydrodipicolinate + H2O + H(+). Its pathway is amino-acid biosynthesis; L-lysine biosynthesis via DAP pathway; (S)-tetrahydrodipicolinate from L-aspartate: step 3/4. In terms of biological role, catalyzes the condensation of (S)-aspartate-beta-semialdehyde [(S)-ASA] and pyruvate to 4-hydroxy-tetrahydrodipicolinate (HTPA). In Prochlorococcus marinus (strain AS9601), this protein is 4-hydroxy-tetrahydrodipicolinate synthase.